A 379-amino-acid polypeptide reads, in one-letter code: Bifunctional enzyme IspD/IspF (379 aa).

Residues 1 to 213 (MSQVSLVVMG…QGFEPPFGGC (213 aa)) are 2-C-methyl-D-erythritol 4-phosphate cytidylyltransferase. The segment at 214–379 (YGGSGFDVHA…DWTKHACFNR (166 aa)) is 2-C-methyl-D-erythritol 2,4-cyclodiphosphate synthase. Residues D220 and H222 each coordinate a divalent metal cation. 4-CDP-2-C-methyl-D-erythritol 2-phosphate is bound by residues 220-222 (DVH) and 246-247 (HS). An a divalent metal cation-binding site is contributed by H254. 4-CDP-2-C-methyl-D-erythritol 2-phosphate is bound by residues 268 to 270 (DIG), 273 to 277 (FPDSD), 344 to 347 (TTTE), F351, and R354.

The protein in the N-terminal section; belongs to the IspD/TarI cytidylyltransferase family. IspD subfamily. In the C-terminal section; belongs to the IspF family. A divalent metal cation is required as a cofactor.

The enzyme catalyses 2-C-methyl-D-erythritol 4-phosphate + CTP + H(+) = 4-CDP-2-C-methyl-D-erythritol + diphosphate. The catalysed reaction is 4-CDP-2-C-methyl-D-erythritol 2-phosphate = 2-C-methyl-D-erythritol 2,4-cyclic diphosphate + CMP. The protein operates within isoprenoid biosynthesis; isopentenyl diphosphate biosynthesis via DXP pathway; isopentenyl diphosphate from 1-deoxy-D-xylulose 5-phosphate: step 2/6. It participates in isoprenoid biosynthesis; isopentenyl diphosphate biosynthesis via DXP pathway; isopentenyl diphosphate from 1-deoxy-D-xylulose 5-phosphate: step 4/6. Functionally, bifunctional enzyme that catalyzes the formation of 4-diphosphocytidyl-2-C-methyl-D-erythritol from CTP and 2-C-methyl-D-erythritol 4-phosphate (MEP) (IspD), and catalyzes the conversion of 4-diphosphocytidyl-2-C-methyl-D-erythritol 2-phosphate (CDP-ME2P) to 2-C-methyl-D-erythritol 2,4-cyclodiphosphate (ME-CPP) with a corresponding release of cytidine 5-monophosphate (CMP) (IspF). The polypeptide is Bifunctional enzyme IspD/IspF (Wolinella succinogenes (strain ATCC 29543 / DSM 1740 / CCUG 13145 / JCM 31913 / LMG 7466 / NCTC 11488 / FDC 602W) (Vibrio succinogenes)).